The primary structure comprises 641 residues: YAP1-binding protein 2 (641 aa).

This sequence belongs to the YBP1 family.

Its subcellular location is the cytoplasm. Involved in oxidative stress response and redox homeostasis. Required for hydrogen peroxide-induced activation of YAP1. Acts in a parallele pathway to YBP1. The chain is YAP1-binding protein 2 from Saccharomyces cerevisiae (strain ATCC 204508 / S288c) (Baker's yeast).